A 159-amino-acid polypeptide reads, in one-letter code: Large ribosomal subunit protein uL11 (159 aa).

This sequence belongs to the universal ribosomal protein uL11 family. As to quaternary structure, part of the ribosomal stalk of the 50S ribosomal subunit. Interacts with L10 and the large rRNA to form the base of the stalk. L10 forms an elongated spine to which L12 dimers bind in a sequential fashion forming a multimeric L10(L12)X complex.

Forms part of the ribosomal stalk which helps the ribosome interact with GTP-bound translation factors. This Methanothrix thermoacetophila (strain DSM 6194 / JCM 14653 / NBRC 101360 / PT) (Methanosaeta thermophila) protein is Large ribosomal subunit protein uL11.